The sequence spans 192 residues: Peptidyl-tRNA hydrolase (192 aa).

Tyr-18 contacts tRNA. Catalysis depends on His-23, which acts as the Proton acceptor. Residues Phe-69, Asn-71, and Asn-117 each contribute to the tRNA site.

It belongs to the PTH family. Monomer.

The protein localises to the cytoplasm. The enzyme catalyses an N-acyl-L-alpha-aminoacyl-tRNA + H2O = an N-acyl-L-amino acid + a tRNA + H(+). In terms of biological role, hydrolyzes ribosome-free peptidyl-tRNAs (with 1 or more amino acids incorporated), which drop off the ribosome during protein synthesis, or as a result of ribosome stalling. Functionally, catalyzes the release of premature peptidyl moieties from peptidyl-tRNA molecules trapped in stalled 50S ribosomal subunits, and thus maintains levels of free tRNAs and 50S ribosomes. This Neisseria meningitidis serogroup B (strain ATCC BAA-335 / MC58) protein is Peptidyl-tRNA hydrolase.